Here is a 499-residue protein sequence, read N- to C-terminus: MDGHTNGTNGSCSKPCEPLTDYCIPDYILNPDSEQVLVDQAPCCPVVVFINSRSGGQLGSSLIKTYRELLNKAQVFDLSEEAPEKVLHRLYCNFEKLKSNGDPIAFQIQSNLRLIVAGGDGTASWLLGVVSDLKLSHPPPIATVPLGTGNNLPFSFGWGKKNPTTDQEAVKSFLGQVKKAREMNIDSWHIIMRMRAPQEGPCEPIAPLELPHSLHAFHRVSGSDSLNMEGYHTYRGGFWNYFSMGMDAQVSYEFHSERKRNPEKFKNQLTNQSTYAKLGLKQGWFAASLTHPSSRNIAQLAKVRIMKRPGGQWEELKIPRSIRSIVCLNLPSFSGGLNPWGTPGTRKVQDRDLTAPFVDDGLIEVVGFRDAWHGLVLLAPNGHGTRLAQAHRIRFEFHKGAAEHTFMRIDGEPWKQPLPKDDDTVVVEISHLRQVTMLASDPCKSKSVNDPSSPMCCSNHDDDERNSLEDEDEWEEGRKKFGAADTFKFPDEVDVAHLS.

Residues 41-194 (APCCPVVVFI…IDSWHIIMRM (154 aa)) enclose the DAGKc domain. The segment at 442 to 479 (PCKSKSVNDPSSPMCCSNHDDDERNSLEDEDEWEEGRK) is disordered. Residues 446–456 (KSVNDPSSPMC) show a composition bias toward polar residues. Over residues 459–468 (NHDDDERNSL) the composition is skewed to basic and acidic residues.

This sequence belongs to the eukaryotic diacylglycerol kinase family. As to quaternary structure, monomer. As to expression, highly expressed in roots.

The catalysed reaction is a 1,2-diacyl-sn-glycerol + ATP = a 1,2-diacyl-sn-glycero-3-phosphate + ADP + H(+). Its function is as follows. Phosphorylates the second messenger diacylglycerol (DAG) to generate phosphatidic acid (PA), another important signaling molecule. PA is required for plant development and responses to abiotic stress. May play a role in disease resistance responses to pathogen attack. Modulates root architecture by regulating the ratio of DAG and PA, which have opposite effect on the promotion or suppression of lateral roots vs seminal roots. Suppresses lateral root number, but promotes seminal root and crown root thickness. The polypeptide is Diacylglycerol kinase 1 (Oryza sativa subsp. japonica (Rice)).